We begin with the raw amino-acid sequence, 303 residues long: N-acetyl-D-glucosamine kinase (303 aa).

Residues 4–11 (GFDIGGTK) and 133–140 (GVGGGLVL) contribute to the ATP site. Residues His-157, Cys-177, Cys-179, and Cys-184 each coordinate Zn(2+).

The protein belongs to the ROK (NagC/XylR) family. NagK subfamily.

The enzyme catalyses N-acetyl-D-glucosamine + ATP = N-acetyl-D-glucosamine 6-phosphate + ADP + H(+). The protein operates within cell wall biogenesis; peptidoglycan recycling. Functionally, catalyzes the phosphorylation of N-acetyl-D-glucosamine (GlcNAc) derived from cell-wall degradation, yielding GlcNAc-6-P. This Salmonella gallinarum (strain 287/91 / NCTC 13346) protein is N-acetyl-D-glucosamine kinase.